We begin with the raw amino-acid sequence, 154 residues long: Aspartate carbamoyltransferase regulatory chain (154 aa).

Positions 109, 114, 138, and 141 each coordinate Zn(2+).

The protein belongs to the PyrI family. Contains catalytic and regulatory chains. Zn(2+) is required as a cofactor.

Functionally, involved in allosteric regulation of aspartate carbamoyltransferase. This is Aspartate carbamoyltransferase regulatory chain from Aeromonas salmonicida (strain A449).